The chain runs to 100 residues: Small ribosomal subunit protein uS14c (100 aa).

A disordered region spans residues 1-22 (MARKGLIQRENKRQKLEQKYHS). A compositionally biased stretch (basic and acidic residues) spans 7-20 (IQRENKRQKLEQKY).

This sequence belongs to the universal ribosomal protein uS14 family. In terms of assembly, part of the 30S ribosomal subunit.

It localises to the plastid. The protein localises to the chloroplast. Binds 16S rRNA, required for the assembly of 30S particles. The chain is Small ribosomal subunit protein uS14c from Daucus carota (Wild carrot).